The following is a 111-amino-acid chain: Beta-2-microglobulin (111 aa).

A signal peptide spans 1 to 17; sequence MRALILLSLGLLRVAVP. An Ig-like C1-type domain is found at 20-111; that stretch reads PQVVVYTYKP…KTSIYKLESF (92 aa).

Belongs to the beta-2-microglobulin family. Heterodimer of an alpha chain and a beta chain. Beta-2-microglobulin is the beta-chain of major histocompatibility complex class I molecules.

The protein resides in the secreted. Functionally, component of the class I major histocompatibility complex (MHC). Involved in the presentation of peptide antigens to the immune system. The protein is Beta-2-microglobulin (b2m) of Rostroraja eglanteria (Clearnose skate).